The chain runs to 272 residues: GTP cyclohydrolase FolE2 (272 aa).

This sequence belongs to the GTP cyclohydrolase IV family.

It catalyses the reaction GTP + H2O = 7,8-dihydroneopterin 3'-triphosphate + formate + H(+). The protein operates within cofactor biosynthesis; 7,8-dihydroneopterin triphosphate biosynthesis; 7,8-dihydroneopterin triphosphate from GTP: step 1/1. In terms of biological role, converts GTP to 7,8-dihydroneopterin triphosphate. This Aromatoleum aromaticum (strain DSM 19018 / LMG 30748 / EbN1) (Azoarcus sp. (strain EbN1)) protein is GTP cyclohydrolase FolE2.